We begin with the raw amino-acid sequence, 328 residues long: Arabinose 5-phosphate isomerase KdsD (328 aa).

An SIS domain is found at 42–184; it reads CEKMFWCKGK…AVALLKARGF (143 aa). Substrate-binding positions include 75-76, H82, H88, 114-123, 148-150, T222, and D275; these read GT, ALIPVLKRLH, and KVA. H82 is a Zn(2+) binding site. The region spanning 210-268 is the CBS 1 domain; it reads MHTGDEIPHVKKTASLRDALLEVTRKNLGMTVICDDNMMIEGIFTDGDLRRVFDMGVDV. Positions 277–328 constitute a CBS 2 domain; the sequence is MTPGGIRVRPGILAVEALNLMQSRHITSVMVADGDHLLGVLHMHDLLRAGVV.

The protein belongs to the SIS family. GutQ/KpsF subfamily. In terms of assembly, homotetramer.

It catalyses the reaction D-arabinose 5-phosphate = D-ribulose 5-phosphate. The protein operates within carbohydrate biosynthesis; 3-deoxy-D-manno-octulosonate biosynthesis; 3-deoxy-D-manno-octulosonate from D-ribulose 5-phosphate: step 1/3. It participates in bacterial outer membrane biogenesis; lipopolysaccharide biosynthesis. Completely inhibited by 10 uM of nickel, copper, cadmium and mercury ions. Inhibited by zinc with an IC(50) of 1-3 uM. Metal ion inhibition may be a mechanism to control activity in vivo. In terms of biological role, involved in the biosynthesis of 3-deoxy-D-manno-octulosonate (KDO), a unique 8-carbon sugar component of lipopolysaccharides (LPSs). KdsD is not essential in the KDO biosynthesis and can be substituted by GutQ. Catalyzes the reversible aldol-ketol isomerization between D-ribulose 5-phosphate (Ru5P) and D-arabinose 5-phosphate (A5P). This chain is Arabinose 5-phosphate isomerase KdsD (kdsD), found in Escherichia coli (strain K12).